A 634-amino-acid chain; its full sequence is ABC transporter B family member 29, chloroplastic (634 aa).

A chloroplast-targeting transit peptide spans 1 to 51 (MSFLLLTPPPCLLIPPPPLSHRRSSSLFLKHPFQPSPRPLSFCKPSALRLR). Transmembrane regions (helical) follow at residues 75-95 (TVLL…QIVP), 119-139 (LVLA…QAFL), 195-215 (LLNT…HMIV), 219-239 (ALTL…AYLG), 307-327 (IVQV…VILA), and 330-350 (SLSS…IDPV). Positions 77-362 (LLGWLCSCVS…LGKAYNELKQ (286 aa)) constitute an ABC transmembrane type-1 domain. Residues 396–633 (VELCDISFKY…KDSLTSAGLV (238 aa)) form the ABC transporter domain. 430 to 437 (GPSGGGKT) contributes to the ATP binding site.

This sequence belongs to the ABC transporter superfamily. ABCB family. Multidrug resistance exporter (TC 3.A.1.201) subfamily.

Its subcellular location is the plastid. The protein localises to the chloroplast membrane. The sequence is that of ABC transporter B family member 29, chloroplastic (ABCB29) from Arabidopsis thaliana (Mouse-ear cress).